The sequence spans 71 residues: Serine palmitoyltransferase small subunit A (71 aa).

Residues 1 to 12 (MAGMALARAWKQ) lie on the Cytoplasmic side of the membrane. The chain crosses the membrane as a helical span at residues 13 to 29 (MSWFYYQYLLVTALYML). The Lumenal portion of the chain corresponds to 30-34 (EPWER). The helical transmembrane segment at 35–57 (TVFNSMLVSVVGMALYTGYVFMP) threads the bilayer. Over 58–71 (QHIMAILHYFEIVQ) the chain is Cytoplasmic.

The protein belongs to the SPTSS family. SPTSSA subfamily. In terms of assembly, component of the serine palmitoyltransferase (SPT) complex, which is composed of SPTLC1, SPTLC2 or SPTLC3 and SPTSSA or SPTSSB. The heterodimer consisting of SPTLC1 and SPTLC2/SPTLC3 forms the catalytic core of the enzyme, while SPTSSA or SPTSSB subunits determine substrate specificity. SPT also interacts with ORMDL proteins, especially ORMDL3, which negatively regulate SPT activity in the presence of ceramides. Interacts with MBOAT7; the interaction plays a role in MBOAT7 localization to mitochondria-associated membranes.

The protein resides in the endoplasmic reticulum membrane. It participates in lipid metabolism; sphingolipid metabolism. In terms of biological role, component of the serine palmitoyltransferase multisubunit enzyme (SPT) that catalyzes the initial and rate-limiting step in sphingolipid biosynthesis by condensing L-serine and activated acyl-CoA (most commonly palmitoyl-CoA) to form long-chain bases. The SPT complex is composed of SPTLC1, SPTLC2 or SPTLC3 and SPTSSA or SPTSSB. Within this complex, the heterodimer consisting of SPTLC1 and SPTLC2/SPTLC3 forms the catalytic core. Within the SPT complex, SPTSSA stimulates the catalytic activity and plays a role in substrate specificity, which depends upon the overall complex composition. The SPTLC1-SPTLC2-SPTSSA complex shows a strong preference for C16-CoA substrate, while the SPTLC1-SPTLC3-SPTSSA isozyme uses both C14-CoA and C16-CoA as substrates, with a slight preference for C14-CoA. Independently of its action as a SPT component, may be involved in MBOAT7 localization to mitochondria-associated membranes, a membrane bridge between the endoplasmic reticulum and mitochondria, may hence affect MBOAT7-catalyzed incorporation of arachidonic acid into phosphatidylinositol. The polypeptide is Serine palmitoyltransferase small subunit A (Mus musculus (Mouse)).